The primary structure comprises 443 residues: MQSVVNQDWRGALIRHLLLVLAASLVLGVVSGHYGWALALGLALYLGWTLWQLLRLHQWLRNHQPDEPPPDSYGLWGEVFDNIYHLQRRNQRARGRLQAVIDRIQESTAALRDAVIMLDSDGNLEWWNLAAENLLGLKTPQDGGQPVSNLIRHPRFKEYFDQEDYREPLEIPSPINERLRLQFHITLYGNREHLMLVRDVTRVHQLEQMRKDFVANVSHELRTPLTVIAGYLETLLDNVEDVNPRWLRALQQMQQQAGRMQNLLNDLLLLAKLEATDYPGDNKPVAVDALLASIRNDAQALSAGRNHRISLDAAPAVQLKGSEAELRSAFSNLVFNAVKYTPDEGEIRIRWWADEQGAHLSVQDTGIGVDPKHLPRLTERFYRVDSSRASNTGGTGLGLAIVKHVLIRHRARLEISSVPGKGSTFTCHFAPAQVAEAERKAPK.

Residues 17–37 (LLLVLAASLVLGVVSGHYGWA) traverse the membrane as a helical segment. Positions 93–182 (ARGRLQAVID…SPINERLRLQ (90 aa)) constitute a PAS domain. One can recognise a Histidine kinase domain in the interval 216-433 (NVSHELRTPL…TFTCHFAPAQ (218 aa)). Position 219 is a phosphohistidine; by autocatalysis (His-219).

The protein resides in the cell membrane. The enzyme catalyses ATP + protein L-histidine = ADP + protein N-phospho-L-histidine.. In terms of biological role, member of the two-component regulatory system PhoR/PhoB involved in the phosphate regulon genes expression. PhoR may function as a membrane-associated protein kinase that phosphorylates PhoB in response to environmental signals. This is Phosphate regulon sensor protein PhoR (phoR) from Pseudomonas aeruginosa (strain ATCC 15692 / DSM 22644 / CIP 104116 / JCM 14847 / LMG 12228 / 1C / PRS 101 / PAO1).